A 157-amino-acid chain; its full sequence is Ribonuclease H (157 aa).

The 142-residue stretch at 3 to 144 folds into the RNase H type-1 domain; sequence ELKQLYIFTD…CDVLARKAAE (142 aa). 4 residues coordinate Mg(2+): D12, E50, D72, and D136.

It belongs to the RNase H family. As to quaternary structure, monomer. Mg(2+) serves as cofactor.

The protein localises to the cytoplasm. The enzyme catalyses Endonucleolytic cleavage to 5'-phosphomonoester.. Endonuclease that specifically degrades the RNA of RNA-DNA hybrids. The chain is Ribonuclease H from Shewanella frigidimarina (strain NCIMB 400).